A 292-amino-acid polypeptide reads, in one-letter code: Siderophore triacetylfusarinine C esterase (292 aa).

Arg-97, Ser-148, Tyr-149, Ser-174, Trp-176, and His-267 together coordinate triacetylfusarinine C.

The protein belongs to the esterase D family.

The protein localises to the cytoplasm. It carries out the reaction triacetylfusarinine C + 3 H2O = 3 N-acetylfusarinine + Fe(3+). Its function is as follows. Displays specific triacetylfusarinine C (TAFC) esterase activity but does not hydrolyze fusarinine C, which has the same core structure as TAFC. Hydrolysis optimizes but is not essential for TAFC-mediated iron uptake. Both extra- and intracellular siderophores have been shown to be crucial for the virulence. Subsequent to chelation of iron and uptake, FsC and TAFC are hydrolyzed and the iron is transferred to the metabolism or to the intracellular siderophore ferricrocin (FC) for transport and storage of iron. Hydrolyzes both TAFC and DF-TAFC with equal efficiencies, suggesting that its function might not be restricted to the release of iron from the siderophore but might also include the degradation of the iron-free chelator to protect cells. The protein is Siderophore triacetylfusarinine C esterase of Aspergillus fumigatus (strain ATCC MYA-4609 / CBS 101355 / FGSC A1100 / Af293) (Neosartorya fumigata).